A 141-amino-acid chain; its full sequence is Hemoglobin subunit alpha-D (141 aa).

Residues 1-141 (VLTGEDKKHV…VAAVLAEKYR (141 aa)) form the Globin domain. The heme b site is built by His58 and His87.

The protein belongs to the globin family. Heterotetramer of two alpha-D chains and two beta chains. Red blood cells.

Involved in oxygen transport from the lung to the various peripheral tissues. The chain is Hemoglobin subunit alpha-D (HBAD) from Turdus merula (Common blackbird).